A 368-amino-acid polypeptide reads, in one-letter code: Cell division protein FtsZ 1 (368 aa).

GTP-binding positions include 52–56, 139–141, E170, R174, and D217; these read GGGCN and GTG.

This sequence belongs to the FtsZ family. In terms of assembly, homodimer. Polymerizes to form a dynamic ring structure in a strictly GTP-dependent manner. Interacts directly with several other division proteins.

It is found in the cytoplasm. In terms of biological role, essential cell division protein that forms a contractile ring structure (Z ring) at the future cell division site. The regulation of the ring assembly controls the timing and the location of cell division. One of the functions of the FtsZ ring is to recruit other cell division proteins to the septum to produce a new cell wall between the dividing cells. Binds GTP and shows GTPase activity. This chain is Cell division protein FtsZ 1, found in Archaeoglobus fulgidus (strain ATCC 49558 / DSM 4304 / JCM 9628 / NBRC 100126 / VC-16).